The following is a 308-amino-acid chain: Homoserine kinase (308 aa).

95 to 105 (PQSRGLGSSAA) contacts ATP.

The protein belongs to the GHMP kinase family. Homoserine kinase subfamily.

It is found in the cytoplasm. The enzyme catalyses L-homoserine + ATP = O-phospho-L-homoserine + ADP + H(+). Its pathway is amino-acid biosynthesis; L-threonine biosynthesis; L-threonine from L-aspartate: step 4/5. Catalyzes the ATP-dependent phosphorylation of L-homoserine to L-homoserine phosphate. The chain is Homoserine kinase from Corynebacterium jeikeium (strain K411).